The primary structure comprises 142 residues: Large ribosomal subunit protein uL13 (142 aa).

This sequence belongs to the universal ribosomal protein uL13 family. As to quaternary structure, part of the 50S ribosomal subunit.

Functionally, this protein is one of the early assembly proteins of the 50S ribosomal subunit, although it is not seen to bind rRNA by itself. It is important during the early stages of 50S assembly. This chain is Large ribosomal subunit protein uL13, found in Edwardsiella ictaluri (strain 93-146).